The following is a 142-amino-acid chain: Hemoglobin subunit alpha-A (142 aa).

A Globin domain is found at 2–142; sequence VLSAADKNNV…VGTVLTAKYR (141 aa). Histidine 59 contacts O2. Residue histidine 88 coordinates heme b.

Belongs to the globin family. Heterotetramer of two alpha chains and two beta chains. As to expression, red blood cells.

Functionally, involved in oxygen transport from the lung to the various peripheral tissues. The polypeptide is Hemoglobin subunit alpha-A (HBAA) (Gallus gallus (Chicken)).